A 318-amino-acid chain; its full sequence is MNRFSTRLMGATATPPPAPPKARSNENLDKIDMSLDDIIKLNRKEGKKQNFPRLNRRLQQSSARQFRMRVRWGIQQNSGFGKNSLSRRGRVMPGKRRPYGVITGLAARKATGIRKGISPMNRPPLSDKNIERYFPALKRKANLLRQNEVQRKPVAALKRPNQLNRKNNIPNNFTRSGNKLSHQKDTRQATFLFRRGLKVQAQLNSEQLLDDVVAKRTRQWRTSTTNGGILTVSIDNPGAVQCPVTQKPRLTRTAVPSFLTKRDQSDIKKVPKGVPLQFDINSVGKQTGMTLNERFGILKEQRATLTFNKGGSRFVTVG.

Methionine 1 is subject to N-acetylmethionine. The interval 1–27 (MNRFSTRLMGATATPPPAPPKARSNEN) is disordered. The residue at position 14 (threonine 14) is a Phosphothreonine. At serine 24 the chain carries Phosphoserine. The short motif at 27 to 45 (NLDKIDMSLDDIIKLNRKE) is the UAP56-binding motif element. 2 positions are modified to phosphoserine: serine 61 and serine 118. Residue lysine 140 forms a Glycyl lysine isopeptide (Lys-Gly) (interchain with G-Cter in SUMO1) linkage. Positions 163-180 (LNRKNNIPNNFTRSGNKL) are enriched in polar residues. The tract at residues 163 to 183 (LNRKNNIPNNFTRSGNKLSHQ) is disordered. Lysine 261 participates in a covalent cross-link: Glycyl lysine isopeptide (Lys-Gly) (interchain with G-Cter in SUMO2).

This sequence belongs to the UIF family. As to quaternary structure, interacts with DDX39B/UAP56 and NXF1; interaction with DDX39B/UAP56 and NXF1 are mutually exclusive. Interacts with SSRP1; required for its recruitment to mRNAs. Interacts with CHTOP.

It is found in the nucleus. The protein resides in the nucleoplasm. It localises to the nucleus speckle. Required for mRNA export from the nucleus to the cytoplasm. Acts as an adapter that uses the DDX39B/UAP56-NFX1 pathway to ensure efficient mRNA export and delivering to the nuclear pore. Associates with spliced and unspliced mRNAs simultaneously with ALYREF/THOC4. In Bos taurus (Bovine), this protein is UAP56-interacting factor (FYTTD1).